The chain runs to 149 residues: Transcriptional regulator MraZ (149 aa).

SpoVT-AbrB domains lie at Arg6–Asp52 and Ala81–Lys124.

Belongs to the MraZ family. In terms of assembly, forms oligomers.

Its subcellular location is the cytoplasm. The protein resides in the nucleoid. This is Transcriptional regulator MraZ from Nitratidesulfovibrio vulgaris (strain ATCC 29579 / DSM 644 / CCUG 34227 / NCIMB 8303 / VKM B-1760 / Hildenborough) (Desulfovibrio vulgaris).